The primary structure comprises 61 residues: Overexpressed in colon carcinoma 1 protein homolog (61 aa).

A compositionally biased stretch (polar residues) spans 1-13; the sequence is MGCGNSTAASTTP. Residues 1-61 form a disordered region; it reads MGCGNSTAAS…AGQTASTHKE (61 aa). Residues 18-34 show a composition bias toward basic and acidic residues; the sequence is SAKDVQDDSSMDEEKRR. Over residues 48–61 the composition is skewed to polar residues; that stretch reads TNETAGQTASTHKE.

The protein belongs to the OCC1 family.

In Danio rerio (Zebrafish), this protein is Overexpressed in colon carcinoma 1 protein homolog (si:dkey-261e22.4).